Here is a 394-residue protein sequence, read N- to C-terminus: p-hydroxybenzoate hydroxylase (394 aa).

FAD is bound by residues S13, E32, 42-47, and Q102; that span reads RIRAGV. Substrate-binding positions include Y201, 212 to 214, and Y222; that span reads SQR. D286 serves as a coordination point for FAD. Residue P293 coordinates substrate. 299-300 contributes to the FAD binding site; that stretch reads LN.

It belongs to the aromatic-ring hydroxylase family. As to quaternary structure, homodimer. Requires FAD as cofactor.

It carries out the reaction 4-hydroxybenzoate + NADPH + O2 + H(+) = 3,4-dihydroxybenzoate + NADP(+) + H2O. The protein operates within aromatic compound metabolism; benzoate degradation via hydroxylation; 3,4-dihydroxybenzoate from benzoate: step 2/2. In terms of biological role, catalyzes the incorporation of an atom of dioxygen into p-hydroxybenzoate (p-OHB) to form 3,4-dihydroxybenzoate (3,4DOHB). The reaction occurs in two parts: reduction of the flavin adenine dinucleotide (FAD) in the enzyme by reduced nicotinamide adenine dinucleotide phosphate (NADPH) in response to binding p-hydroxybenzoate to the enzyme and oxidation of reduced FAD with oxygen to form a hydroperoxide, which then oxygenates p-hydroxybenzoate. The protein is p-hydroxybenzoate hydroxylase (pobA) of Pseudomonas fluorescens.